The primary structure comprises 312 residues: Olfactory receptor 6X1 (312 aa).

Topologically, residues 1–23 are extracellular; it reads MRNGTVITEFILLGFPVIQGLQT. N-linked (GlcNAc...) asparagine glycosylation occurs at Asn-3. A helical transmembrane segment spans residues 24–44; it reads PLFIAIFLTYILTLAGNGLII. The Cytoplasmic portion of the chain corresponds to 45-52; sequence ATVWAEPR. The chain crosses the membrane as a helical span at residues 53–73; that stretch reads LQIPMYFFLCNLSFLEIWYTT. Residues 74–97 are Extracellular-facing; sequence TVIPKLLGTFVVARTVICMSCCLL. Cysteines 95 and 187 form a disulfide. Residues 98–118 form a helical membrane-spanning segment; it reads QAFFHFFVGTTEFLILTIMSF. The Cytoplasmic portion of the chain corresponds to 119–137; the sequence is DRYLTICNPLHHPTIMTSK. Residues 138–158 traverse the membrane as a helical segment; it reads LCLQLALSSWVVGFTIVFCQT. At 159 to 195 the chain is on the extracellular side; that stretch reads MLLIQLPFCGNNVISHFYCDVGPSLKAACIDTSILEL. A helical membrane pass occupies residues 196–215; it reads LGVIATILVIPGSLLFNMIS. Over 216 to 235 the chain is Cytoplasmic; sequence YIYILSAILRIPSATGHQKT. The helical transmembrane segment at 236-256 threads the bilayer; it reads FSTCASHLTVVSLLYGAVLFM. Residues 257 to 269 lie on the Extracellular side of the membrane; the sequence is YLRPTAHSSFKIN. A helical transmembrane segment spans residues 270 to 290; the sequence is KVVSVLNTILTPLLNPFIYTI. At 291–312 the chain is on the cytoplasmic side; that stretch reads RNKEVKGALRKAMTCPKTGHAK.

Belongs to the G-protein coupled receptor 1 family.

Its subcellular location is the cell membrane. Functionally, odorant receptor. This is Olfactory receptor 6X1 (OR6X1) from Homo sapiens (Human).